The following is a 506-amino-acid chain: 2,3-bisphosphoglycerate-independent phosphoglycerate mutase (506 aa).

Mn(2+) contacts are provided by Asp13 and Ser63. Ser63 functions as the Phosphoserine intermediate in the catalytic mechanism. Substrate contacts are provided by residues His124, 153 to 154 (RD), Arg183, Arg189, 254 to 257 (RADR), and Lys330. The Mn(2+) site is built by Asp396, His400, Asp437, His438, and His456.

Belongs to the BPG-independent phosphoglycerate mutase family. As to quaternary structure, monomer. Requires Mn(2+) as cofactor.

It carries out the reaction (2R)-2-phosphoglycerate = (2R)-3-phosphoglycerate. It functions in the pathway carbohydrate degradation; glycolysis; pyruvate from D-glyceraldehyde 3-phosphate: step 3/5. Its function is as follows. Catalyzes the interconversion of 2-phosphoglycerate and 3-phosphoglycerate. The protein is 2,3-bisphosphoglycerate-independent phosphoglycerate mutase of Cereibacter sphaeroides (strain KD131 / KCTC 12085) (Rhodobacter sphaeroides).